The chain runs to 540 residues: Lysosomal cobalamin transport escort protein LMBD1 (540 aa).

The Extracellular portion of the chain corresponds to 1–10 (MATSGAASAE). Residues 11–31 (LVIGWCIFGLLLLAILAFCWI) form a helical membrane-spanning segment. The Cytoplasmic segment spans residues 32–50 (YVRKYQSRRESEVVSTITA). The chain crosses the membrane as a helical span at residues 51-71 (IFSLAIALITSALLPVDIFLV). Residues 72–100 (SYMKNQNGTFKDWANANVSRQIEDTVLYG) are Extracellular-facing. N-linked (GlcNAc...) asparagine glycans are attached at residues Asn-78 and Asn-88. The helical transmembrane segment at 101-121 (YYTLYSVILFCVFFWIPFVYF) threads the bilayer. Residues 122-144 (YYEEKDDDDTSKCTQIKTALKYT) lie on the Cytoplasmic side of the membrane. A helical transmembrane segment spans residues 145–165 (LGFVVICALLLLVGAFVPLNV). Topologically, residues 166 to 188 (PNNKNSTEWEKVKSLFEELGSSH) are extracellular. Asn-170 is a glycosylation site (N-linked (GlcNAc...) asparagine). A helical membrane pass occupies residues 189–209 (GLAALSFSISSLTLIGMLAAI). The Cytoplasmic segment spans residues 210-305 (TYTAYGMSAL…KFCGALRPLK (96 aa)). A YERL motif; mediates interaction with adapter protein complex 2 and is essential for its function in clathrin-mediated endocytosis of INSR motif is present at residues 232 to 235 (YERL). Thr-238 bears the Phosphothreonine mark. Residues 294–297 (WTKF) carry the WTKF motif; mediates interaction with adapter protein complex 2 and is essential for its function in clathrin-mediated endocytosis of INSR motif. The chain crosses the membrane as a helical span at residues 306 to 326 (IVWGIFFILVALLFVISLFLS). The Extracellular segment spans residues 327-364 (NLDKALHSAGIDSGFIIFGANLSNPLNMLLPLLQTVFP). N-linked (GlcNAc...) asparagine glycosylation occurs at Asn-347. The chain crosses the membrane as a helical span at residues 365-385 (LDYILITIIIMYFIFTSMAGI). Residues 386 to 408 (RNIGIWFFWIRLYKIRRGRTRPQ) are Cytoplasmic-facing. A helical transmembrane segment spans residues 409–429 (ALLFLCMILLLIVLHTSYMIY). The Extracellular portion of the chain corresponds to 430-486 (SLAPQYVMYGSQNYLIETNITSDNHKGNSTLSVPKRCDADAPEDQCTVTRTYLFLHK). Residues Asn-448 and Asn-457 are each glycosylated (N-linked (GlcNAc...) asparagine). Residues 487–507 (FWFFSAAYYFGNWAFLGVFLI) form a helical membrane-spanning segment. Residues 508–540 (GLIVSCCKGKKSVIEGVDEDSDISDDEPSVYSA) lie on the Cytoplasmic side of the membrane. Phosphoserine occurs at positions 528 and 531.

This sequence belongs to the LIMR family. LMBRD1 subfamily. (Microbial infection) Interacts with hepatitis delta virus NES (HDAg-L). As to quaternary structure, interacts with ABCD4; this interaction induces the translocation of ABCD4 from the endoplasmic reticulum to the lysosome. Interacts with ABCD4 and MMACHC; this interaction ensures the transport of cobalamin from the lysosome to the cytoplasm. Interacts with INSR, adapter protein complex 2 and clathrin heavy chain. N-glycosylated. In terms of tissue distribution, isoform 3 is expressed in liver.

The protein resides in the endoplasmic reticulum membrane. Its subcellular location is the lysosome membrane. The protein localises to the cell membrane. It localises to the cytoplasmic vesicle. It is found in the clathrin-coated vesicle. Its function is as follows. Lysosomal membrane chaperone required to export cobalamin (vitamin B12) from the lysosome to the cytosol, allowing its conversion to cofactors. Targets ABCD4 transporter from the endoplasmic reticulum to the lysosome. Then forms a complex with lysosomal ABCD4 and cytoplasmic MMACHC to transport cobalamin across the lysosomal membrane. Acts as an adapter protein which plays an important role in mediating and regulating the internalization of the insulin receptor (INSR). Involved in clathrin-mediated endocytosis of INSR via its interaction with adapter protein complex 2. Essential for the initiation of gastrulation and early formation of mesoderm structures during embryogenesis. Functionally, (Microbial infection) May play a role in the assembly of hepatitis delta virus (HDV). This is Lysosomal cobalamin transport escort protein LMBD1 from Homo sapiens (Human).